A 924-amino-acid polypeptide reads, in one-letter code: Periplasmic nitrate reductase (924 aa).

The segment at residues 1–29 (MNRRDFIKNTAIASACGVAGLSVPSSVLA) is a signal peptide (tat-type signal). The 4Fe-4S Mo/W bis-MGD-type domain occupies 35-91 (WRWDKAVCRFCGTGCGILVARQDGKIVAVKGDPAAPVNRGLNCIKGYFNAKIMYGED). 4 residues coordinate [4Fe-4S] cluster: Cys-42, Cys-45, Cys-49, and Cys-77. Mo-bis(molybdopterin guanine dinucleotide)-binding positions include Lys-79, Gln-147, Asn-172, Cys-176, 209-216 (WGANMAEM), Met-417, Gln-421, Asn-527, 552-553 (SD), Lys-575, Asp-602, and 814-823 (TGRVLEHWHS). Trp-890 is a substrate binding site. Asn-898 and Lys-915 together coordinate Mo-bis(molybdopterin guanine dinucleotide).

This sequence belongs to the prokaryotic molybdopterin-containing oxidoreductase family. NasA/NapA/NarB subfamily. Component of the periplasmic nitrate reductase NapAB complex composed of NapA and NapB. It depends on [4Fe-4S] cluster as a cofactor. Requires Mo-bis(molybdopterin guanine dinucleotide) as cofactor. Post-translationally, predicted to be exported by the Tat system. The position of the signal peptide cleavage has not been experimentally proven.

The protein resides in the periplasm. It carries out the reaction 2 Fe(II)-[cytochrome] + nitrate + 2 H(+) = 2 Fe(III)-[cytochrome] + nitrite + H2O. In terms of biological role, catalytic subunit of the periplasmic nitrate reductase complex NapAB. Receives electrons from NapB and catalyzes the reduction of nitrate to nitrite. This chain is Periplasmic nitrate reductase, found in Campylobacter lari (strain RM2100 / D67 / ATCC BAA-1060).